Here is a 194-residue protein sequence, read N- to C-terminus: Endoribonuclease YbeY (194 aa).

Residues His-151, His-155, and His-161 each contribute to the Zn(2+) site.

It belongs to the endoribonuclease YbeY family. Requires Zn(2+) as cofactor.

It is found in the cytoplasm. In terms of biological role, single strand-specific metallo-endoribonuclease involved in late-stage 70S ribosome quality control and in maturation of the 3' terminus of the 16S rRNA. This Gloeobacter violaceus (strain ATCC 29082 / PCC 7421) protein is Endoribonuclease YbeY.